The primary structure comprises 239 residues: Orotidine 5'-phosphate decarboxylase (239 aa).

Substrate-binding positions include aspartate 15, lysine 37, 64 to 73 (DLKFHDIPNT), threonine 126, arginine 187, glutamine 196, glycine 216, and arginine 217. Lysine 66 (proton donor) is an active-site residue.

It belongs to the OMP decarboxylase family. Type 1 subfamily. As to quaternary structure, homodimer.

It catalyses the reaction orotidine 5'-phosphate + H(+) = UMP + CO2. The protein operates within pyrimidine metabolism; UMP biosynthesis via de novo pathway; UMP from orotate: step 2/2. Functionally, catalyzes the decarboxylation of orotidine 5'-monophosphate (OMP) to uridine 5'-monophosphate (UMP). The sequence is that of Orotidine 5'-phosphate decarboxylase from Geobacter metallireducens (strain ATCC 53774 / DSM 7210 / GS-15).